The chain runs to 363 residues: tRNA(Met) cytidine acetate ligase (363 aa).

Residues 7–20 (IAEFNPFHNGHKYL), Gly96, Asn152, and Arg175 each bind ATP.

The protein belongs to the TmcAL family.

It localises to the cytoplasm. The catalysed reaction is cytidine(34) in elongator tRNA(Met) + acetate + ATP = N(4)-acetylcytidine(34) in elongator tRNA(Met) + AMP + diphosphate. Catalyzes the formation of N(4)-acetylcytidine (ac(4)C) at the wobble position of elongator tRNA(Met), using acetate and ATP as substrates. First activates an acetate ion to form acetyladenylate (Ac-AMP) and then transfers the acetyl group to tRNA to form ac(4)C34. In Streptococcus thermophilus (strain ATCC BAA-491 / LMD-9), this protein is tRNA(Met) cytidine acetate ligase.